A 270-amino-acid polypeptide reads, in one-letter code: MAVGIFDSGLGGLTVLDAVTKALPDVPLIYMGDNAHTPYGVREADDIYDLTTAGVQHLFDRGCDLVILACNTASAAALRRMQEGWVPEGKRVLGVFVPLIEALTERQWGDNSPPREVDVKEVALFATPTTVSSRAFQRELAFRAIGVDVEAQPCGGVVDAIEDGDMILAEALVRSHVDALKRRMPNPQAAILGCTHYPLVEDVFRAALGDGVAVFSQPSLVADSLGDYLKRRPEMLGSGEPAFLTTGDPKSVEAKATIFLRRKITFEAVG.

Residues 7-8 and 39-40 contribute to the substrate site; these read DS and YG. Catalysis depends on Cys70, which acts as the Proton donor/acceptor. 71–72 serves as a coordination point for substrate; it reads NT. Residue Cys194 is the Proton donor/acceptor of the active site. A substrate-binding site is contributed by 195-196; it reads TH.

This sequence belongs to the aspartate/glutamate racemases family.

The catalysed reaction is L-glutamate = D-glutamate. It participates in cell wall biogenesis; peptidoglycan biosynthesis. Its function is as follows. Provides the (R)-glutamate required for cell wall biosynthesis. This Jannaschia sp. (strain CCS1) protein is Glutamate racemase.